Here is a 124-residue protein sequence, read N- to C-terminus: UPF0344 protein BH2983 (124 aa).

Transmembrane regions (helical) follow at residues 15 to 35 (GSWAILIILFLVSYFLIKAGK), 40 to 60 (KILHMIVRLFFVIMLITGAGM), 61 to 81 (LVYWQFAFLFIVKGVLAIVLI), and 102 to 122 (IYWIVFITCLVLVALIGYNVI).

The protein belongs to the UPF0344 family.

It is found in the cell membrane. This chain is UPF0344 protein BH2983, found in Halalkalibacterium halodurans (strain ATCC BAA-125 / DSM 18197 / FERM 7344 / JCM 9153 / C-125) (Bacillus halodurans).